Here is a 106-residue protein sequence, read N- to C-terminus: RNA-binding protein Hfq (106 aa).

The Sm domain maps to 9-68 (DPYLNALRKERVPVSIYLVNGIKLQGQIESFDAFVILLRNNISQMVYKHAVSTIVPSRNI). A disordered region spans residues 78 to 106 (EDEAGEEISAEYTPNAEGQAEATADPLYD).

This sequence belongs to the Hfq family. As to quaternary structure, homohexamer.

Its function is as follows. RNA chaperone that binds small regulatory RNA (sRNAs) and mRNAs to facilitate mRNA translational regulation in response to envelope stress, environmental stress and changes in metabolite concentrations. Also binds with high specificity to tRNAs. In Dichelobacter nodosus (strain VCS1703A), this protein is RNA-binding protein Hfq.